The sequence spans 284 residues: Pantothenate synthetase (284 aa).

30–37 (MGNLHDGH) is an ATP binding site. His-37 acts as the Proton donor in catalysis. Gln-61 is a (R)-pantoate binding site. Residue Gln-61 coordinates beta-alanine. An ATP-binding site is contributed by 149–152 (GEKD). Gln-155 contacts (R)-pantoate. Residues Ile-178 and 186–189 (LSSR) contribute to the ATP site.

It belongs to the pantothenate synthetase family. In terms of assembly, homodimer.

Its subcellular location is the cytoplasm. It catalyses the reaction (R)-pantoate + beta-alanine + ATP = (R)-pantothenate + AMP + diphosphate + H(+). It functions in the pathway cofactor biosynthesis; (R)-pantothenate biosynthesis; (R)-pantothenate from (R)-pantoate and beta-alanine: step 1/1. Catalyzes the condensation of pantoate with beta-alanine in an ATP-dependent reaction via a pantoyl-adenylate intermediate. In Salmonella choleraesuis (strain SC-B67), this protein is Pantothenate synthetase.